The primary structure comprises 1158 residues: Type IV pilus biogenesis factor PilY1 (1158 aa).

An N-terminal signal peptide occupies residues 1–29; the sequence is MIHQITRAGKSLLAAGCTLSILFASDSYA. The Ca(2+) site is built by Asp841, Asn843, Asp845, Ile847, and Asp849.

Belongs to the PilY1 family.

The protein localises to the fimbrium. Its subcellular location is the membrane. It localises to the cytoplasm. The protein resides in the cytosol. Involved in pilus assembly, twitching motility and adhesion to host cells. Primes type IV pili (T4P) assembly and is required for inclusion of minor pilins PilV, PilW and PilX to the surface pili. Stabilizes assembled pilus fibers likely by antagonizing retraction mediated by PilT. Calcium-binding and calcium release by PilY1 seem to be essential for twitching motility and for regulation of pilus retraction dynamics of PilT. Regulates surface-activated virulence possibly by acting as a surface-attachment mechanosensor. The polypeptide is Type IV pilus biogenesis factor PilY1 (Pseudomonas aeruginosa (strain UCBPP-PA14)).